The sequence spans 476 residues: 3-isopropylmalate dehydratase large subunit (476 aa).

The [4Fe-4S] cluster site is built by cysteine 355, cysteine 416, and cysteine 419.

This sequence belongs to the aconitase/IPM isomerase family. LeuC type 1 subfamily. As to quaternary structure, heterodimer of LeuC and LeuD. [4Fe-4S] cluster is required as a cofactor.

It carries out the reaction (2R,3S)-3-isopropylmalate = (2S)-2-isopropylmalate. It participates in amino-acid biosynthesis; L-leucine biosynthesis; L-leucine from 3-methyl-2-oxobutanoate: step 2/4. Its function is as follows. Catalyzes the isomerization between 2-isopropylmalate and 3-isopropylmalate, via the formation of 2-isopropylmaleate. In Sphingopyxis alaskensis (strain DSM 13593 / LMG 18877 / RB2256) (Sphingomonas alaskensis), this protein is 3-isopropylmalate dehydratase large subunit.